Here is a 109-residue protein sequence, read N- to C-terminus: MGDDELAELRRRRMAQLQSQQMDQQQMDEEKQRAKSAMQMALMQILEPEARERLNTIRLTKPEFAAGVEQQLVMLAQSGRIKQKISDAQLKDLLRQLIPAKKDFNIVRK.

The disordered stretch occupies residues 14-35 (MAQLQSQQMDQQQMDEEKQRAK). Over residues 16–25 (QLQSQQMDQQ) the composition is skewed to low complexity.

It belongs to the PDCD5 family.

The sequence is that of DNA-binding protein Mpal_0536 from Methanosphaerula palustris (strain ATCC BAA-1556 / DSM 19958 / E1-9c).